The primary structure comprises 164 residues: NADH-quinone oxidoreductase subunit I (164 aa).

4Fe-4S ferredoxin-type domains are found at residues 55 to 85 (LRRY…IDAE) and 95 to 124 (TRYD…EGPN). Positions 65, 68, 71, 75, 104, 107, 110, and 114 each coordinate [4Fe-4S] cluster.

This sequence belongs to the complex I 23 kDa subunit family. In terms of assembly, NDH-1 is composed of 14 different subunits. Subunits NuoA, H, J, K, L, M, N constitute the membrane sector of the complex. It depends on [4Fe-4S] cluster as a cofactor.

The protein resides in the cell inner membrane. It catalyses the reaction a quinone + NADH + 5 H(+)(in) = a quinol + NAD(+) + 4 H(+)(out). Functionally, NDH-1 shuttles electrons from NADH, via FMN and iron-sulfur (Fe-S) centers, to quinones in the respiratory chain. The immediate electron acceptor for the enzyme in this species is believed to be ubiquinone. Couples the redox reaction to proton translocation (for every two electrons transferred, four hydrogen ions are translocated across the cytoplasmic membrane), and thus conserves the redox energy in a proton gradient. This Jannaschia sp. (strain CCS1) protein is NADH-quinone oxidoreductase subunit I.